The following is a 119-amino-acid chain: Putative membrane protein insertion efficiency factor (119 aa).

The tract at residues 82–119 is disordered; the sequence is NALRGEKGGESAADVPSGGSVSEPPGPAAETSPNAQGA.

It belongs to the UPF0161 family.

It localises to the cell membrane. Could be involved in insertion of integral membrane proteins into the membrane. The protein is Putative membrane protein insertion efficiency factor of Streptomyces griseus subsp. griseus (strain JCM 4626 / CBS 651.72 / NBRC 13350 / KCC S-0626 / ISP 5235).